The sequence spans 154 residues: Transcriptional repressor NrdR (154 aa).

A zinc finger lies at 3–34; that stretch reads CPFCRHPDSRVVDSREADEGQAIRRRRSCPEC. Positions 46 to 136 constitute an ATP-cone domain; that stretch reads LSVVKRSGVT…VYRSFSSAED (91 aa).

This sequence belongs to the NrdR family. It depends on Zn(2+) as a cofactor.

Negatively regulates transcription of bacterial ribonucleotide reductase nrd genes and operons by binding to NrdR-boxes. The polypeptide is Transcriptional repressor NrdR (Rhodococcus jostii (strain RHA1)).